A 195-amino-acid chain; its full sequence is HTH-type transcriptional regulator TtmR (195 aa).

The HTH marR-type domain occupies 47-177 (DSQLCFAVYA…LLDNLASMRD (131 aa)). A DNA-binding region (H-T-H motif) is located at residues 93-116 (VKEIGSRLFLDSGTLTPLLKRLEA).

The protein resides in the cytoplasm. In terms of biological role, formaldehyde-responsive transcription factor that modulates resistance to stress induced by formaldehyde. Impacts the expression of a number of genes encoding transcription factors and/or involved in stress response, including efgA, and which probably collectively trigger a formaldehyde-specific physiological response. Required for optimal transition to methylotrophy. Not involved in a general stress response. In Methylorubrum extorquens (strain PA1) (Methylobacterium extorquens), this protein is HTH-type transcriptional regulator TtmR.